The following is a 270-amino-acid chain: Acyl-[acyl-carrier-protein]--UDP-N-acetylglucosamine O-acyltransferase (270 aa).

The protein belongs to the transferase hexapeptide repeat family. LpxA subfamily. As to quaternary structure, homotrimer.

The protein resides in the cytoplasm. The catalysed reaction is a (3R)-hydroxyacyl-[ACP] + UDP-N-acetyl-alpha-D-glucosamine = a UDP-3-O-[(3R)-3-hydroxyacyl]-N-acetyl-alpha-D-glucosamine + holo-[ACP]. It participates in glycolipid biosynthesis; lipid IV(A) biosynthesis; lipid IV(A) from (3R)-3-hydroxytetradecanoyl-[acyl-carrier-protein] and UDP-N-acetyl-alpha-D-glucosamine: step 1/6. In terms of biological role, involved in the biosynthesis of lipid A, a phosphorylated glycolipid that anchors the lipopolysaccharide to the outer membrane of the cell. The polypeptide is Acyl-[acyl-carrier-protein]--UDP-N-acetylglucosamine O-acyltransferase (Sinorhizobium fredii (strain NBRC 101917 / NGR234)).